A 507-amino-acid polypeptide reads, in one-letter code: Maturase K (507 aa).

The protein belongs to the intron maturase 2 family. MatK subfamily.

The protein localises to the plastid. It localises to the chloroplast. In terms of biological role, usually encoded in the trnK tRNA gene intron. Probably assists in splicing its own and other chloroplast group II introns. The chain is Maturase K from Cryptomeria japonica (Japanese cedar).